We begin with the raw amino-acid sequence, 438 residues long: Transposon Ty2-C Gag polyprotein (438 aa).

Composition is skewed to polar residues over residues 1-11 (MESQQLHQNPR), 19-39 (ASVTSKEVPSNQDPLAVSASN), and 49-60 (KVNSQQETTPGT). Disordered regions lie at residues 1–88 (MESQ…YQQH), 365–397 (NVSRTSPNTTNTKVTTRNYQRTNSSKPRAAKAH), and 419–438 (SSQYLSDDNELSLRPATERI). An RNA-binding region spans residues 295 to 397 (ENNINVSDRL…SSKPRAAKAH (103 aa)). Positions 369–382 (TSPNTTNTKVTTRN) are enriched in low complexity.

As to quaternary structure, homotrimer.

The protein resides in the cytoplasm. Capsid protein (CA) is the structural component of the virus-like particle (VLP), forming the shell that encapsulates the retrotransposons dimeric RNA genome. The particles are assembled from trimer-clustered units and there are holes in the capsid shells that allow for the diffusion of macromolecules. CA also has nucleocapsid-like chaperone activity, promoting primer tRNA(i)-Met annealing to the multipartite primer-binding site (PBS), dimerization of Ty2 RNA and initiation of reverse transcription. The polypeptide is Transposon Ty2-C Gag polyprotein (TY2A-C) (Saccharomyces cerevisiae (strain ATCC 204508 / S288c) (Baker's yeast)).